Here is an 89-residue protein sequence, read N- to C-terminus: UPF0237 protein CA_C0478 (89 aa).

The 75-residue stretch at 4 to 78 (IITVIGKDKV…KKLGVSIKIQ (75 aa)) folds into the ACT domain.

Belongs to the UPF0237 family.

This is UPF0237 protein CA_C0478 from Clostridium acetobutylicum (strain ATCC 824 / DSM 792 / JCM 1419 / IAM 19013 / LMG 5710 / NBRC 13948 / NRRL B-527 / VKM B-1787 / 2291 / W).